The following is a 229-amino-acid chain: Cytochrome c oxidase subunit 2 (229 aa).

Residues 1–26 (MSTWANLGLQDSASPLMEQLIFFHDH) lie on the Mitochondrial intermembrane side of the membrane. The helical transmembrane segment at 27–48 (ALLILVMITVLVGYLMFMLFFN) threads the bilayer. Residues 49 to 62 (SYVNRFLLHGQLIE) are Mitochondrial matrix-facing. Residues 63 to 82 (MIWTILPAIILLFIAMPSLR) form a helical membrane-spanning segment. Topologically, residues 83–229 (LLYLLDEINE…IKWISSTVNS (147 aa)) are mitochondrial intermembrane. Cu cation is bound by residues histidine 161, cysteine 196, glutamate 198, cysteine 200, histidine 204, and methionine 207. Glutamate 198 is a Mg(2+) binding site.

It belongs to the cytochrome c oxidase subunit 2 family. As to quaternary structure, component of the cytochrome c oxidase (complex IV, CIV), a multisubunit enzyme composed of a catalytic core of 3 subunits and several supernumerary subunits. The complex exists as a monomer or a dimer and forms supercomplexes (SCs) in the inner mitochondrial membrane with ubiquinol-cytochrome c oxidoreductase (cytochrome b-c1 complex, complex III, CIII). Cu cation is required as a cofactor.

It is found in the mitochondrion inner membrane. The catalysed reaction is 4 Fe(II)-[cytochrome c] + O2 + 8 H(+)(in) = 4 Fe(III)-[cytochrome c] + 2 H2O + 4 H(+)(out). Its function is as follows. Component of the cytochrome c oxidase, the last enzyme in the mitochondrial electron transport chain which drives oxidative phosphorylation. The respiratory chain contains 3 multisubunit complexes succinate dehydrogenase (complex II, CII), ubiquinol-cytochrome c oxidoreductase (cytochrome b-c1 complex, complex III, CIII) and cytochrome c oxidase (complex IV, CIV), that cooperate to transfer electrons derived from NADH and succinate to molecular oxygen, creating an electrochemical gradient over the inner membrane that drives transmembrane transport and the ATP synthase. Cytochrome c oxidase is the component of the respiratory chain that catalyzes the reduction of oxygen to water. Electrons originating from reduced cytochrome c in the intermembrane space (IMS) are transferred via the dinuclear copper A center (CU(A)) of subunit 2 and heme A of subunit 1 to the active site in subunit 1, a binuclear center (BNC) formed by heme A3 and copper B (CU(B)). The BNC reduces molecular oxygen to 2 water molecules using 4 electrons from cytochrome c in the IMS and 4 protons from the mitochondrial matrix. The polypeptide is Cytochrome c oxidase subunit 2 (mt:CoII) (Drosophila lowei (Fruit fly)).